We begin with the raw amino-acid sequence, 239 residues long: Fatty acid metabolism regulator protein (239 aa).

One can recognise an HTH gntR-type domain in the interval Q6–F74. The segment at residues E34–Q53 is a DNA-binding region (H-T-H motif).

Homodimer.

It localises to the cytoplasm. In terms of biological role, multifunctional regulator of fatty acid metabolism. In Edwardsiella ictaluri (strain 93-146), this protein is Fatty acid metabolism regulator protein.